Reading from the N-terminus, the 149-residue chain is Basic phospholipase A2 homolog MitTx-beta (149 aa).

Positions 1–30 (MDKMNPAHLLVLAAVCVSLLGASSIPPQAL) are cleaved as a signal peptide. 7 cysteine pairs are disulfide-bonded: cysteine 41-cysteine 100, cysteine 55-cysteine 148, cysteine 57-cysteine 73, cysteine 72-cysteine 130, cysteine 79-cysteine 123, cysteine 89-cysteine 116, and cysteine 109-cysteine 121.

Belongs to the phospholipase A2 family. Group I subfamily. K49 sub-subfamily. As to quaternary structure, heterodimer of an alpha (Kunitz-type) and a beta (phospholipase A2 homolog) chains; non-covalently-linked. In terms of tissue distribution, expressed by the venom gland.

It is found in the secreted. Its function is as follows. Heterodimer: MitTx, a heteromeric complex between Kunitz- and phospholipase-A2-like proteins, potently, persistently and selectively activates rat and chicken acid-sensing ion channel ASIC1. Both alternatively spliced rat isoforms ASIC1a and ASIC1b are activated, with a higher potency for ASIC1a (EC(50)=9.4 nM) vs ASIC1b (EC(50)=23 nM). The rat ASIC3 subtype is also sensitive to the heterodimer, but with a lower potency (EC(50)=830 nM). On rat ASIC2a, the toxin shows a very weak activation, but produces a remarkable potentiation (&gt;100-fold) of protons when the extracellular pH drops below neutrality. Moderate and weak activations are also observed on the heterotrimers Asic1a-Asic2a and Asic1a-Asic3 (expressed in CHO cells), respectively. The binding sites of the beta subunit of MitTx and the spider psalmotoxin-1 toxin overlap, explaining why these toxins are mutually exclusive. In vivo, the heterodimer elicits robust pain-related behavior in mice by activation of ASIC1 channels on capsaicin-sensitive nerve fibers. In terms of biological role, monomer: does not have phospholipase A2 activity but may maintain some lipid-binding character from its PLA2 lineage, which could aid in effecting neuronal depolarization. The protein is Basic phospholipase A2 homolog MitTx-beta of Micrurus tener tener (Texas coral snake).